Consider the following 411-residue polypeptide: Diaminobutyrate--2-oxoglutarate transaminase (411 aa).

An N6-(pyridoxal phosphate)lysine modification is found at Lys262.

It belongs to the class-III pyridoxal-phosphate-dependent aminotransferase family. Requires pyridoxal 5'-phosphate as cofactor.

The enzyme catalyses L-2,4-diaminobutanoate + 2-oxoglutarate = L-aspartate 4-semialdehyde + L-glutamate. The protein operates within amine and polyamine biosynthesis; ectoine biosynthesis; L-ectoine from L-aspartate 4-semialdehyde: step 1/3. Catalyzes reversively the conversion of L-aspartate beta-semialdehyde (ASA) to L-2,4-diaminobutyrate (DABA) by transamination with L-glutamate. This chain is Diaminobutyrate--2-oxoglutarate transaminase (ectB), found in Vibrio cholerae serotype O1 (strain ATCC 39315 / El Tor Inaba N16961).